A 498-amino-acid chain; its full sequence is Probable cytosol aminopeptidase (498 aa).

Mn(2+) is bound by residues Lys-267 and Asp-272. Lys-279 is an active-site residue. Residues Asp-290, Asp-349, and Glu-351 each coordinate Mn(2+). The active site involves Arg-353.

Belongs to the peptidase M17 family. Requires Mn(2+) as cofactor.

It localises to the cytoplasm. The enzyme catalyses Release of an N-terminal amino acid, Xaa-|-Yaa-, in which Xaa is preferably Leu, but may be other amino acids including Pro although not Arg or Lys, and Yaa may be Pro. Amino acid amides and methyl esters are also readily hydrolyzed, but rates on arylamides are exceedingly low.. It catalyses the reaction Release of an N-terminal amino acid, preferentially leucine, but not glutamic or aspartic acids.. Presumably involved in the processing and regular turnover of intracellular proteins. Catalyzes the removal of unsubstituted N-terminal amino acids from various peptides. This Dechloromonas aromatica (strain RCB) protein is Probable cytosol aminopeptidase.